The sequence spans 445 residues: Glycine betaine monooxygenase oxygenase subunit (445 aa).

A Rieske domain is found at 73–180 (WLFVGMTCEI…VTHAGGFLFV (108 aa)). C115, H117, C135, and H138 together coordinate [2Fe-2S] cluster. Fe cation-binding residues include H234 and H239.

This sequence belongs to the bacterial ring-hydroxylating dioxygenase alpha subunit family. As to quaternary structure, homotrimer. The system is composed of an oxygenase subunit (BmoA) and a reductase subunit (BmoB). Maximal specific activity is obtained when the ratio of BmoA to BmoB is 5:1. It depends on [2Fe-2S] cluster as a cofactor. Fe cation is required as a cofactor.

The catalysed reaction is glycine betaine + NADH + O2 + H(+) = N,N-dimethylglycine + formaldehyde + NAD(+) + H2O. Its activity is regulated as follows. Activity is absolutely dependent on the presence of BmoB. Glycine betaine monooxygenase activity is significantly enhanced by Fe(2+) and severely inhibited by heavy-metal ions, including Co(2+), Mn(2+), Zn(2+), Cu(2+) and Ag(+). Severely inhibited by EDTA. Involved in degradation of glycine betaine. Part of a Rieske-type oxygenase system that catalyzes the conversion of glycine betaine (GB) to dimethylglycine (DMG). This subunit is the terminal oxygenase component of the system. Is specific for GB, and does not show any activity on choline, L-carnitine, stachydrine, dimethylglycine or sarcosine. Activity is strictly dependent on NADH. This is Glycine betaine monooxygenase oxygenase subunit from Chromohalobacter salexigens (strain ATCC BAA-138 / DSM 3043 / CIP 106854 / NCIMB 13768 / 1H11).